We begin with the raw amino-acid sequence, 495 residues long: MTDRNLRELLAPWVPNAPGRVLREMTLDSRTAAAGDLFVAVAGHQTDGRRYIPQAIAQGVAAVVAQAEGEAEEGEIRELHGVPVIYLHRLQERLSALAGRFYQQPLHALRLTGVTGTNGKTTTTHLLAQWAQLLGETSAVMGTVGNGVLGHIHPADNTTGSPIEVQQLLLQLQRQGATFAAMEVSSHGLVQHRVSILHFAAAVFTNLSRDHLDYHGDMAQYEAAKWRLFGELDVGQRIINADDATGRRWLQKLPQAIAVAVSGTLPPERQGDWLCAGEVRYHARGADIPFRSSWGEGIVHCQLIGEFNVSNLLLALTTLLALGYPLPALLDSASRLQSICGRMEVFHAEDRPTVLVDYAHTPDALEKALTAARLHCHGKLWCVFGCGGDRDKGKRPLMGAIAEQYADRVIITDDNPRGEAAQDIINDIKSGLLDAGRAQVISGRAEAVTSAIMQAAPADLVLVAGKGHEDYQIIGKQRLDYSDRTTVARLLGVMA.

Residues L27, S29, and 44 to 46 (HQT) each bind UDP-N-acetyl-alpha-D-muramoyl-L-alanyl-D-glutamate. ATP is bound at residue 116 to 122 (GTNGKTT). UDP-N-acetyl-alpha-D-muramoyl-L-alanyl-D-glutamate is bound by residues N157, 158-159 (TT), S185, Q191, and R193. K225 is modified (N6-carboxylysine). Residues R390, 414 to 417 (DNPR), G465, and E469 each bind meso-2,6-diaminopimelate. Residues 414 to 417 (DNPR) carry the Meso-diaminopimelate recognition motif motif.

The protein belongs to the MurCDEF family. MurE subfamily. Mg(2+) serves as cofactor. Carboxylation is probably crucial for Mg(2+) binding and, consequently, for the gamma-phosphate positioning of ATP.

Its subcellular location is the cytoplasm. The enzyme catalyses UDP-N-acetyl-alpha-D-muramoyl-L-alanyl-D-glutamate + meso-2,6-diaminopimelate + ATP = UDP-N-acetyl-alpha-D-muramoyl-L-alanyl-gamma-D-glutamyl-meso-2,6-diaminopimelate + ADP + phosphate + H(+). It participates in cell wall biogenesis; peptidoglycan biosynthesis. In terms of biological role, catalyzes the addition of meso-diaminopimelic acid to the nucleotide precursor UDP-N-acetylmuramoyl-L-alanyl-D-glutamate (UMAG) in the biosynthesis of bacterial cell-wall peptidoglycan. The protein is UDP-N-acetylmuramoyl-L-alanyl-D-glutamate--2,6-diaminopimelate ligase of Sodalis glossinidius (strain morsitans).